Consider the following 108-residue polypeptide: Nucleoid-associated protein BP1550 (108 aa).

The disordered stretch occupies residues 87–108 (SQEKMASVTAGMPLPPGMKLPF). The span at 99–108 (PLPPGMKLPF) shows a compositional bias: pro residues.

It belongs to the YbaB/EbfC family. Homodimer.

It is found in the cytoplasm. Its subcellular location is the nucleoid. Binds to DNA and alters its conformation. May be involved in regulation of gene expression, nucleoid organization and DNA protection. The protein is Nucleoid-associated protein BP1550 of Bordetella pertussis (strain Tohama I / ATCC BAA-589 / NCTC 13251).